The following is a 101-amino-acid chain: uncharacterized protein (101 aa).

A signal peptide spans Met1–Gly17. Cys18 is lipidated: N-palmitoyl cysteine. Cys18 carries the S-diacylglycerol cysteine lipid modification.

It localises to the cell membrane. This is an uncharacterized protein from Pasteurella multocida (strain Pm70).